The chain runs to 134 residues: Thioredoxin-like protein Clot (134 aa).

One can recognise a Thioredoxin domain in the interval 1-134; it reads MTLKKVDANP…LILPLLAPST (134 aa). Residues Cys48 and Cys51 each act as nucleophile in the active site. The cysteines at positions 48 and 51 are disulfide-linked.

It belongs to the thioredoxin family.

Functionally, probable thiol-disulfide oxidoreductase that may participate in various redox reactions. The chain is Thioredoxin-like protein Clot from Arabidopsis thaliana (Mouse-ear cress).